Reading from the N-terminus, the 352-residue chain is Glycoprotein integral membrane protein 1 (352 aa).

A signal peptide spans 1–25 (MASRCKIHLTVAYLLILCILASAQS). Over 26–281 (KQMTTETVVL…KLRRFLSDSV (256 aa)) the chain is Extracellular. N-linked (GlcNAc...) asparagine glycosylation is found at asparagine 36, asparagine 44, asparagine 89, asparagine 109, asparagine 151, and asparagine 197. Residues 206–245 (NSETTQEEIAAPGKLPETPLRMDPETLYESREEEERRSDS) are disordered. Over residues 225 to 244 (LRMDPETLYESREEEERRSD) the composition is skewed to basic and acidic residues. Residues 282 to 302 (PLFFLVMWVVVVGVAGSAVVI) form a helical membrane-spanning segment. At 303–352 (KILDLIFPSCEHRGFFHLNPETLMPDDEKVSLIDNMEGDMTEKSILLIEK) the chain is on the cytoplasmic side.

It localises to the membrane. This chain is Glycoprotein integral membrane protein 1 (ginm1), found in Danio rerio (Zebrafish).